Consider the following 311-residue polypeptide: Lipoyl synthase (311 aa).

[4Fe-4S] cluster-binding residues include Cys-47, Cys-52, Cys-58, Cys-73, Cys-77, Cys-80, and Ser-286. The Radical SAM core domain maps to 59 to 276 (WSRHTATYLA…RSVGESLGLF (218 aa)).

Belongs to the radical SAM superfamily. Lipoyl synthase family. It depends on [4Fe-4S] cluster as a cofactor.

The protein resides in the cytoplasm. It catalyses the reaction [[Fe-S] cluster scaffold protein carrying a second [4Fe-4S](2+) cluster] + N(6)-octanoyl-L-lysyl-[protein] + 2 oxidized [2Fe-2S]-[ferredoxin] + 2 S-adenosyl-L-methionine + 4 H(+) = [[Fe-S] cluster scaffold protein] + N(6)-[(R)-dihydrolipoyl]-L-lysyl-[protein] + 4 Fe(3+) + 2 hydrogen sulfide + 2 5'-deoxyadenosine + 2 L-methionine + 2 reduced [2Fe-2S]-[ferredoxin]. It participates in protein modification; protein lipoylation via endogenous pathway; protein N(6)-(lipoyl)lysine from octanoyl-[acyl-carrier-protein]: step 2/2. In terms of biological role, catalyzes the radical-mediated insertion of two sulfur atoms into the C-6 and C-8 positions of the octanoyl moiety bound to the lipoyl domains of lipoate-dependent enzymes, thereby converting the octanoylated domains into lipoylated derivatives. In Chlamydia trachomatis serovar L2 (strain ATCC VR-902B / DSM 19102 / 434/Bu), this protein is Lipoyl synthase.